Consider the following 476-residue polypeptide: Protein transport protein Sec61 subunit alpha (476 aa).

Residues G2–L33 lie on the Cytoplasmic side of the membrane. Residues W34–I53 form a helical membrane-spanning segment. At M54 to L76 the chain is on the lumenal side. The chain crosses the membrane as a helical span at residues M77–G96. The Cytoplasmic segment spans residues A97–K117. A helical transmembrane segment spans residues L118–G138. Over D139 to G144 the chain is Lumenal. Residues A145 to L165 traverse the membrane as a helical segment. The Cytoplasmic portion of the chain corresponds to D166–G172. A helical membrane pass occupies residues Y173–W193. Over K194–P240 the chain is Lumenal. Residues N241–F261 form a helical membrane-spanning segment. The Cytoplasmic segment spans residues R262–N288. The chain crosses the membrane as a helical span at residues I289–S309. Over T310–V354 the chain is Lumenal. The helical transmembrane segment at L355 to F375 threads the bilayer. The Cytoplasmic portion of the chain corresponds to S376–A420. Residues A421 to I441 traverse the membrane as a helical segment. Over G442–T445 the chain is Lumenal. A helical membrane pass occupies residues G446 to V462. The Cytoplasmic segment spans residues K463–F476.

The protein belongs to the SecY/SEC61-alpha family. In terms of assembly, the SEC61 channel-forming translocon complex consists of channel-forming core components SEC61A1, SEC61B and SEC61G and different auxiliary components such as SEC62 and SEC63. The SEC61 channel associates with the multi-pass translocon (MPT) complex.

It is found in the endoplasmic reticulum membrane. Its function is as follows. Component of SEC61 channel-forming translocon complex that mediates transport of signal peptide-containing precursor polypeptides across the endoplasmic reticulum (ER). Forms a ribosome receptor and a gated pore in the ER membrane, both functions required for cotranslational translocation of nascent polypeptides. May cooperate with auxiliary protein SEC62, SEC63 and HSPA5/BiP to enable post-translational transport of small presecretory proteins. The SEC61 channel is also involved in ER membrane insertion of transmembrane proteins: it mediates membrane insertion of the first few transmembrane segments of proteins, while insertion of subsequent transmembrane regions of multi-pass membrane proteins is mediated by the multi-pass translocon (MPT) complex. In Bovichtus variegatus (Thornfish), this protein is Protein transport protein Sec61 subunit alpha (sec61a).